Consider the following 191-residue polypeptide: Protein Ves (191 aa).

Belongs to the Ves family.

This chain is Protein Ves, found in Escherichia coli (strain ATCC 8739 / DSM 1576 / NBRC 3972 / NCIMB 8545 / WDCM 00012 / Crooks).